We begin with the raw amino-acid sequence, 128 residues long: Large ribosomal subunit protein bL21 (128 aa).

The tract at residues 104 to 128 (GKKPSVGPRPKRVKAEPAPAADAAE) is disordered. A compositionally biased stretch (low complexity) spans 119–128 (EPAPAADAAE).

It belongs to the bacterial ribosomal protein bL21 family. As to quaternary structure, part of the 50S ribosomal subunit. Contacts protein L20.

This protein binds to 23S rRNA in the presence of protein L20. The protein is Large ribosomal subunit protein bL21 of Rhodopseudomonas palustris (strain BisB5).